A 547-amino-acid polypeptide reads, in one-letter code: CTP synthase (547 aa).

Residues 1-265 (MTKFVFVTGG…DRIVCEKLAL (265 aa)) form an amidoligase domain region. Ser-13 is a CTP binding site. Ser-13 provides a ligand contact to UTP. ATP-binding positions include 14-19 (SLGKGI) and Asp-71. Positions 71 and 139 each coordinate Mg(2+). Residues 146 to 148 (DIE), 186 to 191 (KTKPTQ), and Lys-222 contribute to the CTP site. UTP-binding positions include 186–191 (KTKPTQ) and Lys-222. The Glutamine amidotransferase type-1 domain maps to 290–542 (TIGMVGKYVD…IKAALAHKHA (253 aa)). An L-glutamine-binding site is contributed by Gly-351. Cys-378 acts as the Nucleophile; for glutamine hydrolysis in catalysis. L-glutamine is bound by residues 379 to 382 (LGMQ), Glu-402, and Arg-468. Catalysis depends on residues His-515 and Glu-517.

It belongs to the CTP synthase family. In terms of assembly, homotetramer.

It carries out the reaction UTP + L-glutamine + ATP + H2O = CTP + L-glutamate + ADP + phosphate + 2 H(+). The enzyme catalyses L-glutamine + H2O = L-glutamate + NH4(+). The catalysed reaction is UTP + NH4(+) + ATP = CTP + ADP + phosphate + 2 H(+). It functions in the pathway pyrimidine metabolism; CTP biosynthesis via de novo pathway; CTP from UDP: step 2/2. With respect to regulation, allosterically activated by GTP, when glutamine is the substrate; GTP has no effect on the reaction when ammonia is the substrate. The allosteric effector GTP functions by stabilizing the protein conformation that binds the tetrahedral intermediate(s) formed during glutamine hydrolysis. Inhibited by the product CTP, via allosteric rather than competitive inhibition. Catalyzes the ATP-dependent amination of UTP to CTP with either L-glutamine or ammonia as the source of nitrogen. Regulates intracellular CTP levels through interactions with the four ribonucleotide triphosphates. This is CTP synthase from Janthinobacterium sp. (strain Marseille) (Minibacterium massiliensis).